The chain runs to 243 residues: DNA repair protein RecO (243 aa).

The protein belongs to the RecO family.

Involved in DNA repair and RecF pathway recombination. The chain is DNA repair protein RecO from Frankia casuarinae (strain DSM 45818 / CECT 9043 / HFP020203 / CcI3).